The chain runs to 257 residues: uncharacterized protein (257 aa).

Position 127 is a phosphoserine (Ser-127). Disordered regions lie at residues 146–174 (HEDPKPSSTYNSSISAPPEDFKQDGEDDG) and 210–231 (AREKATELKQRRQEQATNRREK). Positions 151-160 (PSSTYNSSIS) are enriched in polar residues. A coiled-coil region spans residues 196-257 (HVRMVREVHE…QQQQEDEQKT (62 aa)).

This is an uncharacterized protein from Arabidopsis thaliana (Mouse-ear cress).